A 116-amino-acid chain; its full sequence is Spexin (116 aa).

An N-terminal signal peptide occupies residues Met1–Gly26. A propeptide spanning residues Ala27 to Arg35 is cleaved from the precursor. Gln49 is modified (glutamine amide). Propeptides lie at residues Gly50–Trp116 and Pro74–Trp116. A compositionally biased stretch (basic and acidic residues) spans Asp56–Asn73. The interval Asp56 to Asn75 is disordered.

The protein belongs to the spexin family. Widely expressed; predominantly expressed in epithelial cells in the skin, respiratory, digestive, urinary and reproductive systems, retina, adrenal gland and various brain regions. In the adrenal gland, expressed in parenchymal cells of the cortex and in ganglionic cells and intermingled cortical cells of the medulla. Expressed in the type I glomic cells within the carotid body (at protein level). Widely expressed. Strongly expressed in esophagus, liver, pancreas, kidney, brain, hypothalamus, thyroid and ovary. Expressed in the zona glomerulosa (ZG) and zona fasciculata/reticularis (ZF/R) of the adrenal gland. Also expressed in stomach, lung, skeletal muscle, heart, uterus, spleen, adrenal gland and testis. Weakly expressed in small intestine, thymus, urinary bladder and adenohypophysis. In the brain, is expressed in the Barrington's nucleus, with lesser amount in the ventrolateral caudal periaqueductal gray (PAG) and in the mesopontine tegmentum.

Its subcellular location is the secreted. The protein localises to the extracellular space. It is found in the cytoplasmic vesicle. It localises to the secretory vesicle. Plays a role as a central modulator of cardiovascular and renal function and nociception. Also plays a role in energy metabolism and storage. Inhibits adrenocortical cell proliferation with minor stimulation on corticosteroid release. Functionally, acts as a ligand for galanin receptors GALR2 and GALR3. Intracerebroventricular administration of the peptide induces an increase in arterial blood pressure, a decrease in both heart rate and renal excretion and delayed natriuresis. Intraventricular administration of the peptide induces antinociceptive activity. Intraperitoneal administration of the peptide induces a reduction in food consumption and body weight. Inhibits long chain fatty acid uptake into adipocytes. Also induces contraction of muscarinic-like stomach smooth muscles. Its function is as follows. Intracerebroventricular administration of the peptide induces a decrease in heart rate, but no change in arterial pressure, and an increase in urine flow rate. Intraventricular administration of the peptide induces antinociceptive activity. In Rattus norvegicus (Rat), this protein is Spexin (SPX).